A 245-amino-acid polypeptide reads, in one-letter code: Ribonuclease PH (245 aa).

Residues Arg86 and 124-126 (GTR) each bind phosphate.

This sequence belongs to the RNase PH family. As to quaternary structure, homohexameric ring arranged as a trimer of dimers.

It catalyses the reaction tRNA(n+1) + phosphate = tRNA(n) + a ribonucleoside 5'-diphosphate. In terms of biological role, phosphorolytic 3'-5' exoribonuclease that plays an important role in tRNA 3'-end maturation. Removes nucleotide residues following the 3'-CCA terminus of tRNAs; can also add nucleotides to the ends of RNA molecules by using nucleoside diphosphates as substrates, but this may not be physiologically important. Probably plays a role in initiation of 16S rRNA degradation (leading to ribosome degradation) during starvation. The polypeptide is Ribonuclease PH (Bacillus cereus (strain ATCC 10987 / NRS 248)).